The following is a 220-amino-acid chain: Putative threonylcarbamoyl-AMP synthase (220 aa).

Residues alanine 17 to valine 202 form the YrdC-like domain.

This sequence belongs to the SUA5 family.

The protein resides in the cytoplasm. It catalyses the reaction L-threonine + hydrogencarbonate + ATP = L-threonylcarbamoyladenylate + diphosphate + H2O. Required for the formation of a threonylcarbamoyl group on adenosine at position 37 (t(6)A37) in tRNAs that read codons beginning with adenine. Catalyzes the conversion of L-threonine, HCO(3)(-)/CO(2) and ATP to give threonylcarbamoyl-AMP (TC-AMP) as the acyladenylate intermediate, with the release of diphosphate. This chain is Putative threonylcarbamoyl-AMP synthase, found in Mycobacterium leprae (strain TN).